A 922-amino-acid chain; its full sequence is DNA gyrase subunit A (922 aa).

The Topo IIA-type catalytic domain maps to 34 to 534 (LPDVRDGLKP…SSAEINIEDL (501 aa)). The O-(5'-phospho-DNA)-tyrosine intermediate role is filled by Y122. The short motif at 561–567 (QRRGGRG) is the GyrA-box element. Disordered stretches follow at residues 715 to 763 (MQPM…VRPM) and 899 to 922 (IDGE…DPEE). A compositionally biased stretch (acidic residues) spans 723–743 (DDVDGDDESVIDAGNDDDGSD).

This sequence belongs to the type II topoisomerase GyrA/ParC subunit family. Heterotetramer, composed of two GyrA and two GyrB chains. In the heterotetramer, GyrA contains the active site tyrosine that forms a transient covalent intermediate with DNA, while GyrB binds cofactors and catalyzes ATP hydrolysis.

It is found in the cytoplasm. It carries out the reaction ATP-dependent breakage, passage and rejoining of double-stranded DNA.. Its function is as follows. A type II topoisomerase that negatively supercoils closed circular double-stranded (ds) DNA in an ATP-dependent manner to modulate DNA topology and maintain chromosomes in an underwound state. Negative supercoiling favors strand separation, and DNA replication, transcription, recombination and repair, all of which involve strand separation. Also able to catalyze the interconversion of other topological isomers of dsDNA rings, including catenanes and knotted rings. Type II topoisomerases break and join 2 DNA strands simultaneously in an ATP-dependent manner. This is DNA gyrase subunit A from Aeromonas salmonicida.